The chain runs to 314 residues: Phospho-N-acetylmuramoyl-pentapeptide-transferase (314 aa).

Transmembrane regions (helical) follow at residues Leu4 to Ile24, Thr52 to Ile72, Leu77 to Tyr97, Ile111 to Phe131, Leu146 to Ala166, Leu169 to Ala189, Ile191 to Phe211, Ile219 to Tyr239, Val242 to Ile262, and Ile294 to Leu314.

This sequence belongs to the glycosyltransferase 4 family. MraY subfamily. It depends on Mg(2+) as a cofactor.

The protein localises to the cell inner membrane. The catalysed reaction is UDP-N-acetyl-alpha-D-muramoyl-L-alanyl-gamma-D-glutamyl-meso-2,6-diaminopimeloyl-D-alanyl-D-alanine + di-trans,octa-cis-undecaprenyl phosphate = di-trans,octa-cis-undecaprenyl diphospho-N-acetyl-alpha-D-muramoyl-L-alanyl-D-glutamyl-meso-2,6-diaminopimeloyl-D-alanyl-D-alanine + UMP. It participates in cell wall biogenesis; peptidoglycan biosynthesis. Functionally, catalyzes the initial step of the lipid cycle reactions in the biosynthesis of the cell wall peptidoglycan: transfers peptidoglycan precursor phospho-MurNAc-pentapeptide from UDP-MurNAc-pentapeptide onto the lipid carrier undecaprenyl phosphate, yielding undecaprenyl-pyrophosphoryl-MurNAc-pentapeptide, known as lipid I. This Petrotoga mobilis (strain DSM 10674 / SJ95) protein is Phospho-N-acetylmuramoyl-pentapeptide-transferase.